A 338-amino-acid chain; its full sequence is Taste receptor type 2 member 39 (338 aa).

Residues 1–30 (MLGRCFPPNTKEKQQLRMIKLCDPAESELS) lie on the Extracellular side of the membrane. A helical membrane pass occupies residues 31–51 (PFLITLTLAVLLAEYLTGIIA). The Cytoplasmic portion of the chain corresponds to 52–74 (NGFITAIHAAECVQNKSVSTSGR). The chain crosses the membrane as a helical span at residues 75-95 (ILVFLSVSRIALQSLMMLEIT). The Extracellular segment spans residues 96 to 116 (ISSTSLSFYSEDTVYYAFKIS). The helical transmembrane segment at 117–137 (FIFLNFCSLWFAAWLSFFYFV) threads the bilayer. At 138-156 (KIANFSYPLFLKLRWRISG) the chain is on the cytoplasmic side. Residues 157–177 (LIPWLLWLSVFISFSHSMFCI) form a helical membrane-spanning segment. Residues 178 to 205 (NICTGYCDNSFPIHSSNSTEKTYFSEIS) lie on the Extracellular side of the membrane. An N-linked (GlcNAc...) asparagine glycan is attached at Asn-194. A helical membrane pass occupies residues 206–226 (VVSLAFFFNLGIVIPLIMFIL). At 227-262 (AAILLILSLKRHTLYMXSNATGSKDPSMEAHIGAIK) the chain is on the cytoplasmic side. The helical transmembrane segment at 263 to 283 (ATSYFLILYIFNAVALFIYLS) threads the bilayer. At 284 to 291 (NMFDINSL) the chain is on the extracellular side. Residues 292 to 312 (WNTLCQIIMAAYPASHSILLI) form a helical membrane-spanning segment. Topologically, residues 313-338 (KDNPGLRRAWKQLQHRLHLYPKEWTL) are cytoplasmic.

The protein belongs to the G-protein coupled receptor T2R family.

The protein resides in the membrane. Receptor that may play a role in the perception of bitterness and is gustducin-linked. May play a role in sensing the chemical composition of the gastrointestinal content. The activity of this receptor may stimulate alpha gustducin, mediate PLC-beta-2 activation and lead to the gating of TRPM5. In Papio hamadryas (Hamadryas baboon), this protein is Taste receptor type 2 member 39 (TAS2R39).